A 149-amino-acid chain; its full sequence is Snake venom vascular endothelial growth factor toxin 2 (149 aa).

The signal sequence occupies residues 1-24 (MAAYLLAVAILFCIQGWPSGTVQG). Residue Gln-25 is modified to Pyrrolidone carboxylic acid. Cystine bridges form between Cys-38/Cys-80, Cys-69/Cys-115, and Cys-73/Cys-117. Residues 118–149 (RPRSGRVNSGKRKRNPEEGGAESQVPLGLTSF) form a disordered region.

This sequence belongs to the PDGF/VEGF growth factor family. Snake venom VEGF subfamily. In terms of assembly, homodimer; disulfide-linked. Interacts with VEGF receptor-1 (FLT1) with a high affinity, whereas it binds to VEGF receptor-2 (KDR) with a low affinity. Does not bind VEGF receptor-3 (FLT4). As to expression, expressed by the venom gland.

It is found in the secreted. In terms of biological role, snake venom VEGFs that may contribute to venom dispersion and prey subjugation by inducing vascular permeability and hypotension. This protein induces an increase in capillary permeability after intradermal injection, as well as a drastic hypotensive effect after intravenous injection. The hypotension is mediated by nitric oxide (NO), which is produced by VEGF-activated endothelium NO synthase. Also induces angiogenesis in vitro. Like other crotalid VEGFs, this protein interacts with VEGF receptor-1 (FLT1) with a high affinity, whereas it binds to VEGF receptor-2 (KDR) with a low affinity. This chain is Snake venom vascular endothelial growth factor toxin 2, found in Sistrurus catenatus edwardsii (Desert massasauga).